The chain runs to 77 residues: Putative defensin-like protein 187 (77 aa).

An N-terminal signal peptide occupies residues 1–19; the sequence is MKNSSIMFVLIVVFLISSS. 3 cysteine pairs are disulfide-bonded: C31–C77, C43–C71, and C47–C73.

This sequence belongs to the DEFL family.

It localises to the secreted. In Arabidopsis thaliana (Mouse-ear cress), this protein is Putative defensin-like protein 187 (LCR42).